The following is a 472-amino-acid chain: Uronate isomerase (472 aa).

The protein belongs to the metallo-dependent hydrolases superfamily. Uronate isomerase family.

It carries out the reaction D-glucuronate = D-fructuronate. The enzyme catalyses aldehydo-D-galacturonate = keto-D-tagaturonate. It functions in the pathway carbohydrate metabolism; pentose and glucuronate interconversion. This chain is Uronate isomerase, found in Xanthomonas euvesicatoria pv. vesicatoria (strain 85-10) (Xanthomonas campestris pv. vesicatoria).